We begin with the raw amino-acid sequence, 207 residues long: MEAHVERALREGLTEEERAALEPAVMAHHTFPPSTTTATTAAATCTSLVTQRVAAPVRAVWPIVRSFGNPQRYKHFVRTCALAAGDGASVGSVREVTVVSGLPASTSTERLEMLDDDRHIISFRVVGGQHRLRNYRSVTSVTEFQPPAAGPGPAPPYCVVVESYVVDVPDGNTAEDTRMFTDTVVKLNLQMLAAVAEDSSSASRRRD.

The segment at 31-197 (FPPSTTTATT…NLQMLAAVAE (167 aa)) is START-like. Residues K74, 104–109 (ASTSTE), 131–137 (RLRNYRS), and E162 each bind abscisate. Residues 100–104 (SGLPA) carry the Gate loop motif. Positions 130 to 132 (HRL) match the Latch loop motif.

This sequence belongs to the PYR/PYL/RCAR abscisic acid intracellular receptor family. As to quaternary structure, homodimer. Interacts with PP2C06. Interacts with PP2C50. Binding to PP2C50 is dependent on the presence of abscisic acid (ABA). Interacts with PP2C30 and PP2C53. Binding to PP2C30 and PP2C53 is dependent on the presence of ABA.

The protein localises to the cytoplasm. It localises to the cytosol. The protein resides in the nucleus. Its function is as follows. Involved in abscisic acid (ABA) signaling during seed germination and abiotic stress response. Acts as a positive regulator of ABA-mediated inhibition of seed germination, and tolerance to drought and cold stresses. Inhibits the activity of the protein phosphatases PP2C06 and PP2C09 when activated by abscisic acid (ABA). The sequence is that of Abscisic acid receptor PYL9 from Oryza sativa subsp. japonica (Rice).